We begin with the raw amino-acid sequence, 350 residues long: Aldo-keto reductase 1B (350 aa).

Catalysis depends on Y84, which acts as the Proton donor. Substrate is bound at residue H146. 244–306 is a binding site for NADP(+); that stretch reads SPLGSPNRPW…SVTKDRIESN (63 aa).

Belongs to the aldo/keto reductase family.

It is found in the cytoplasm. The enzyme catalyses an alditol + NADP(+) = an aldose + NADPH + H(+). It catalyses the reaction all-trans-retinol + NADP(+) = all-trans-retinal + NADPH + H(+). It carries out the reaction 9-cis-retinol + NADP(+) = 9-cis-retinal + NADPH + H(+). The catalysed reaction is 13-cis-retinol + NADP(+) = 13-cis-retinal + NADPH + H(+). The enzyme catalyses glycerol + NADP(+) = D-glyceraldehyde + NADPH + H(+). It catalyses the reaction glycerol + NADP(+) = L-glyceraldehyde + NADPH + H(+). It carries out the reaction prenol + NADP(+) = 3-methyl-2-butenal + NADPH + H(+). The catalysed reaction is (E)-hex-2-en-1-ol + NADP(+) = (E)-hex-2-enal + NADPH + H(+). The enzyme catalyses (E,E)-2,4-hexadien-1-ol + NADP(+) = (E,E)-2,4-hexadienal + NADPH + H(+). It catalyses the reaction a 4-hydroxynonen-1-ol + NADP(+) = a 4-hydroxynonenal + NADPH + H(+). It carries out the reaction prostaglandin F2alpha + NADP(+) = prostaglandin H2 + NADPH + H(+). The catalysed reaction is allyl alcohol + NADP(+) = acrolein + NADPH + H(+). The enzyme catalyses pyridine 3-methanol + NADP(+) = pyridine-3-carbaldehyde + NADPH + H(+). It catalyses the reaction 1-hexadecanoyl-2-(5-oxopentanoyl)-sn-glycero-3-phosphocholine + NADPH + H(+) = 1-hexadecanoyl-2-(5-hydroxypentanoyl)-sn-glycero-3-phosphocholine + NADP(+). It carries out the reaction 1-hexadecanoyl-2-(7-oxoheptanoyl)-sn-glycero-3-phosphocholine + NADPH + H(+) = 1-hexadecanoyl-2-(7-hydroxyheptanoyl)-sn-glycero-3-phosphocholine + NADP(+). The catalysed reaction is 1-hexadecanoyl-2-(9-oxononanoyl)-sn-glycero-3-phosphocholine + NADPH + H(+) = 1-hexadecanoyl-2-(9-hydroxynonanoyl)-sn-glycero-3-phosphocholine + NADP(+). The enzyme catalyses 1-hexadecanoyl-2-(5-oxopentanoyl)-sn-glycero-3-phosphoethanolamine + NADPH + H(+) = 1-hexadecanoyl-2-(5-hydroxypentanoyl)-sn-glycero-3-phosphoethanolamine + NADP(+). Functionally, catalyzes the NADPH-dependent reduction of a wide variety of carbonyl-containing compounds to their corresponding alcohols. Displays enzymatic activity towards endogenous metabolites such as aromatic and aliphatic aldehydes, ketones, monosaccharides, bile acids and xenobiotics substrates. Key enzyme in the polyol pathway, catalyzes reduction of glucose to sorbitol during hyperglycemia. Reduces steroids and their derivatives and prostaglandins. Through production of prostaglandin F2alpha may regulate the activity of non-muscle myosin II in an autocrine or paracrine fashion; influences border cell and nurse cell stiffness to facilitate border cell cluster migration. Also regulates the cell surface localization of integrins in an autocrine or paracrine fashion; influences border cell adhesion to maintain border cell cluster morphology. In hemocytes, probably contributes to production of sugar alcohols in the hemolymph, which act as alarmins involved in gut-fat body innate immunological communication (GFIC); leads to activation of the imd/Relish signaling pathway in the fat body. The chain is Aldo-keto reductase 1B from Drosophila melanogaster (Fruit fly).